The following is a 191-amino-acid chain: Peptidyl-tRNA hydrolase (191 aa).

A tRNA-binding site is contributed by Tyr17. His22 (proton acceptor) is an active-site residue. Residues Tyr68, Asn70, and Asn116 each coordinate tRNA.

The protein belongs to the PTH family. Monomer.

The protein localises to the cytoplasm. The enzyme catalyses an N-acyl-L-alpha-aminoacyl-tRNA + H2O = an N-acyl-L-amino acid + a tRNA + H(+). Hydrolyzes ribosome-free peptidyl-tRNAs (with 1 or more amino acids incorporated), which drop off the ribosome during protein synthesis, or as a result of ribosome stalling. Functionally, catalyzes the release of premature peptidyl moieties from peptidyl-tRNA molecules trapped in stalled 50S ribosomal subunits, and thus maintains levels of free tRNAs and 50S ribosomes. The protein is Peptidyl-tRNA hydrolase of Francisella tularensis subsp. tularensis (strain FSC 198).